The chain runs to 168 residues: uncharacterized protein (168 aa).

Residues 1-29 constitute a mitochondrion transit peptide; sequence MGWRFPSPSPRQASPVAPLLAAPTAVRSC. Positions 98 to 110 are enriched in basic and acidic residues; the sequence is GETKARRAREEGK. Residues 98-152 are disordered; sequence GETKARRAREEGKLPSLGNAPAPRRRSVAWPAAEGSCAAPESSPPASEASLPAPE. Over residues 128-152 the composition is skewed to low complexity; the sequence is PAAEGSCAAPESSPPASEASLPAPE.

It is found in the mitochondrion. This is an uncharacterized protein from Homo sapiens (Human).